The sequence spans 469 residues: MTSQLHKKGEAWSARFSEPMSELVKRYTSSVFFDKRLALVDIAGSLAHANMLAAQKIISADDLAAIERGMAQIKGEIERGEFEWQLDLEDVHLNIEARLTALIGDAGKRLHTGRSRNDQVATDIRLWLRGEIDRIGGLLNDLRGALIDLAEQNADTIMPGFTHLQVAQPVTFGHHLLAYVEMFSRDAERMRDCRTRVNRLPLGAAALAGTSYPIDRHAVAKSLGFDGICANSLDAVSDRDFAIEFTAAAALVMTHVSRFSEELVLWMSPRVGFIDIADRFCTGSSIMPQKKNPDVPELARGKTGRVNGHLMALLTLMKGQPLAYNKDNQEDKEPLFDTVDTVADTLRIFAEMVAGITVKPDAMRAAALQGFSTATDLADYLVKRGLPFRDAHEAVAHAVKICDDRGIDLADLTLDEMKRELPNVAQLIGDDVFDYLTLEGSVASRNHPGGTAPDQVRAAAQAARAALGK.

Belongs to the lyase 1 family. Argininosuccinate lyase subfamily.

It localises to the cytoplasm. The catalysed reaction is 2-(N(omega)-L-arginino)succinate = fumarate + L-arginine. The protein operates within amino-acid biosynthesis; L-arginine biosynthesis; L-arginine from L-ornithine and carbamoyl phosphate: step 3/3. This is Argininosuccinate lyase from Burkholderia multivorans (strain ATCC 17616 / 249).